Consider the following 406-residue polypeptide: Copper transport protein CTR1 (406 aa).

Residues 1 to 152 lie on the Cytoplasmic side of the membrane; that stretch reads MEGMNMGSSM…HHLHANNSGK (152 aa). 3 consecutive repeat copies span residues 9–27, 28–46, and 47–65. Residues 9–65 form a 3 X 19 AA tandem repeats of S-M-X-M-X-A-M-S-S-A-S-K-T-X-X-S-X-M-X region; that stretch reads SMNMDAMSSASKTVASSMASMSMDAMSSASKTILSSMSSMSMEAMSSASKTLASTMS. The segment at 71-117 is disordered; it reads SMGSSSMSGMSMSMSSTPTSSASAQTTSDSSMSGMSGMSSSDNSSSS. Residues 153–173 form a helical membrane-spanning segment; sequence AFGIFLLFVVAAFVYKLLLFV. Over 174–250 the chain is Extracellular; the sequence is SWCLEVHWFK…RAFLVFTSTM (77 aa). Residues 251–271 form a helical membrane-spanning segment; the sequence is IIYMLMLATMSFVLTYVFAVI. Over 272 to 406 the chain is Cytoplasmic; sequence TGLALSEVFF…LLPAEKFTHN (135 aa). The REP-III motif lies at 304-315; sequence CPGFGNCQCGRH. Residues 318–406 form a disordered region; the sequence is PSPDPIAVAD…LLPAEKFTHN (89 aa). Ser344 bears the Phosphoserine mark. Lys345 is covalently cross-linked (Glycyl lysine isopeptide (Lys-Gly) (interchain with G-Cter in ubiquitin)). A Phosphoserine modification is found at Ser349. Polar residues-rich tracts occupy residues 349–375 and 384–395; these read SENN…NQAN and SKLQEQSGNMDQ. A Phosphothreonine modification is found at Thr356. Ser369 carries the post-translational modification Phosphoserine.

As to quaternary structure, homooligomer. Extensively O-glycosylated.

It is found in the cell membrane. It carries out the reaction Cu(2+)(in) = Cu(2+)(out). Functionally, high-affinity copper transporter of plasma membrane that mediates copper uptake under low copper conditions. Copper transport through the high affinity system requiring CTRl supplies the iron transport multicopper ferroxidase FET3 with copper, which in turn is required for ferrous iron uptake. The energy for translocation is unlikely to be directly derived from ATP hydrolysis and the exact mechanism driving the transmembrane transport of copper has still to be determined. Binds 4 copper ions via its C-terminal cystein-rich domain and is able to deliver Cu(I) directly to both the chaperone ATX1 and to an N-terminal domain of the CCC2 protein. Also able to mediate the uptake of the anticancer drug cisplatin. The sequence is that of Copper transport protein CTR1 from Saccharomyces cerevisiae (strain ATCC 204508 / S288c) (Baker's yeast).